The chain runs to 383 residues: tRNA(Met) cytidine acetate ligase (383 aa).

Residues 7-20 (ITEY…HRYH), G101, N150, and R175 contribute to the ATP site.

Belongs to the TmcAL family.

The protein resides in the cytoplasm. It carries out the reaction cytidine(34) in elongator tRNA(Met) + acetate + ATP = N(4)-acetylcytidine(34) in elongator tRNA(Met) + AMP + diphosphate. Catalyzes the formation of N(4)-acetylcytidine (ac(4)C) at the wobble position of elongator tRNA(Met), using acetate and ATP as substrates. First activates an acetate ion to form acetyladenylate (Ac-AMP) and then transfers the acetyl group to tRNA to form ac(4)C34. This is tRNA(Met) cytidine acetate ligase from Lactiplantibacillus plantarum (strain ATCC BAA-793 / NCIMB 8826 / WCFS1) (Lactobacillus plantarum).